Consider the following 78-residue polypeptide: Large ribosomal subunit protein eL20 (78 aa).

This sequence belongs to the eukaryotic ribosomal protein eL20 family. As to quaternary structure, part of the 50S ribosomal subunit. Binds 23S rRNA.

The sequence is that of Large ribosomal subunit protein eL20 from Nanoarchaeum equitans (strain Kin4-M).